A 119-amino-acid polypeptide reads, in one-letter code: Large ribosomal subunit protein bL20 (119 aa).

The protein belongs to the bacterial ribosomal protein bL20 family.

Its function is as follows. Binds directly to 23S ribosomal RNA and is necessary for the in vitro assembly process of the 50S ribosomal subunit. It is not involved in the protein synthesizing functions of that subunit. In Mycoplasma capricolum subsp. capricolum (strain California kid / ATCC 27343 / NCTC 10154), this protein is Large ribosomal subunit protein bL20.